The following is a 93-amino-acid chain: MISEEQVRHVAELARLGLTDEEVARMGGQLGAILDSIEKIRELDLEGVPPTANPLNLTNVFRPDEPRESLRREEALAVAPETADGMFAVPRID.

It belongs to the GatC family. Heterotrimer of A, B and C subunits.

It carries out the reaction L-glutamyl-tRNA(Gln) + L-glutamine + ATP + H2O = L-glutaminyl-tRNA(Gln) + L-glutamate + ADP + phosphate + H(+). The catalysed reaction is L-aspartyl-tRNA(Asn) + L-glutamine + ATP + H2O = L-asparaginyl-tRNA(Asn) + L-glutamate + ADP + phosphate + 2 H(+). Its function is as follows. Allows the formation of correctly charged Asn-tRNA(Asn) or Gln-tRNA(Gln) through the transamidation of misacylated Asp-tRNA(Asn) or Glu-tRNA(Gln) in organisms which lack either or both of asparaginyl-tRNA or glutaminyl-tRNA synthetases. The reaction takes place in the presence of glutamine and ATP through an activated phospho-Asp-tRNA(Asn) or phospho-Glu-tRNA(Gln). In Rubrobacter xylanophilus (strain DSM 9941 / JCM 11954 / NBRC 16129 / PRD-1), this protein is Aspartyl/glutamyl-tRNA(Asn/Gln) amidotransferase subunit C.